The following is a 904-amino-acid chain: Leucine--tRNA ligase (904 aa).

A 'HIGH' region motif is present at residues Pro-49–His-59. Residues Thr-663–Ser-667 carry the 'KMSKS' region motif. Residue Lys-666 coordinates ATP.

Belongs to the class-I aminoacyl-tRNA synthetase family.

It is found in the cytoplasm. The enzyme catalyses tRNA(Leu) + L-leucine + ATP = L-leucyl-tRNA(Leu) + AMP + diphosphate. This Roseiflexus castenholzii (strain DSM 13941 / HLO8) protein is Leucine--tRNA ligase.